A 361-amino-acid chain; its full sequence is 3-dehydroquinate synthase (361 aa).

Residues 71–76 (DGEQNK), 105–109 (GVIGD), 129–130 (TT), Lys-142, Lys-151, and 169–172 (CLNT) each bind NAD(+). Zn(2+)-binding residues include Glu-184, His-247, and His-264.

The protein belongs to the sugar phosphate cyclases superfamily. Dehydroquinate synthase family. Co(2+) serves as cofactor. Requires Zn(2+) as cofactor. The cofactor is NAD(+).

Its subcellular location is the cytoplasm. The enzyme catalyses 7-phospho-2-dehydro-3-deoxy-D-arabino-heptonate = 3-dehydroquinate + phosphate. It functions in the pathway metabolic intermediate biosynthesis; chorismate biosynthesis; chorismate from D-erythrose 4-phosphate and phosphoenolpyruvate: step 2/7. Functionally, catalyzes the conversion of 3-deoxy-D-arabino-heptulosonate 7-phosphate (DAHP) to dehydroquinate (DHQ). This is 3-dehydroquinate synthase from Sodalis glossinidius (strain morsitans).